The chain runs to 359 residues: MARSDVLIFVSTLLLFLSLLTVADAELVKSDKFPVVVSTWPFLEAVRAAWRAVDNGSSAVEAVVEGCSACEELRCDGTVGPGGSPDENGETMIDALVMDGVTMEVGAVAAMRYVKDGIRAAHLVMKYSQHTLLAGEGASAFAISMGLPGPMNLSSPESVKKWSDWKENQCQPNFRKNVVPANDCGPYKPNNSAMNVFVDKSTESCEMGAIEYKPPLVGPHNHDTISMAVIDRMGHIAVGTSTNGATYKIPGRVGDGPIVGSSAYADDEVGGCGATGDGDTMMRFLPCYQVVESMRQGMKPEEAAKDAISRIARKFPDFVGAVVAVDKNGSHAGACYGWTFQYSVQNPDMNDVQVFTVLP.

The active-site Nucleophile is Thr-224. Substrate is bound by residues 252–255 (RVGD) and 275–278 (TGDG).

This sequence belongs to the Ntn-hydrolase family. In terms of assembly, heterotetramer of two alpha and two beta chains arranged as a dimer of alpha/beta heterodimers. Cleaved into an alpha and beta chain by autocatalysis; this activates the enzyme. The N-terminal residue of the beta subunit is responsible for the nucleophile hydrolase activity.

It catalyses the reaction Cleavage of a beta-linked Asp residue from the N-terminus of a polypeptide.. Its function is as follows. Acts in asparagine catabolism but also in the final steps of protein degradation via hydrolysis of a range of isoaspartyl dipeptides. The chain is Probable isoaspartyl peptidase/L-asparaginase 3 from Arabidopsis thaliana (Mouse-ear cress).